The primary structure comprises 175 residues: ATP synthase subunit delta (175 aa).

This sequence belongs to the ATPase delta chain family. As to quaternary structure, F-type ATPases have 2 components, F(1) - the catalytic core - and F(0) - the membrane proton channel. F(1) has five subunits: alpha(3), beta(3), gamma(1), delta(1), epsilon(1). F(0) has three main subunits: a(1), b(2) and c(10-14). The alpha and beta chains form an alternating ring which encloses part of the gamma chain. F(1) is attached to F(0) by a central stalk formed by the gamma and epsilon chains, while a peripheral stalk is formed by the delta and b chains.

It is found in the cell membrane. In terms of biological role, f(1)F(0) ATP synthase produces ATP from ADP in the presence of a proton or sodium gradient. F-type ATPases consist of two structural domains, F(1) containing the extramembraneous catalytic core and F(0) containing the membrane proton channel, linked together by a central stalk and a peripheral stalk. During catalysis, ATP synthesis in the catalytic domain of F(1) is coupled via a rotary mechanism of the central stalk subunits to proton translocation. This protein is part of the stalk that links CF(0) to CF(1). It either transmits conformational changes from CF(0) to CF(1) or is implicated in proton conduction. This chain is ATP synthase subunit delta, found in Ruminiclostridium cellulolyticum (strain ATCC 35319 / DSM 5812 / JCM 6584 / H10) (Clostridium cellulolyticum).